The primary structure comprises 132 residues: ATP synthase epsilon chain (132 aa).

It belongs to the ATPase epsilon chain family. As to quaternary structure, F-type ATPases have 2 components, CF(1) - the catalytic core - and CF(0) - the membrane proton channel. CF(1) has five subunits: alpha(3), beta(3), gamma(1), delta(1), epsilon(1). CF(0) has three main subunits: a, b and c.

It localises to the cell membrane. Produces ATP from ADP in the presence of a proton gradient across the membrane. The polypeptide is ATP synthase epsilon chain (Clostridium kluyveri (strain NBRC 12016)).